The chain runs to 238 residues: Ribosomal RNA small subunit methyltransferase G (238 aa).

Residues Gly-77, Phe-82, 128–129, and Arg-147 each bind S-adenosyl-L-methionine; that span reads AE.

The protein belongs to the methyltransferase superfamily. RNA methyltransferase RsmG family.

The protein resides in the cytoplasm. Specifically methylates the N7 position of guanine in position 535 of 16S rRNA. This Listeria monocytogenes serotype 4b (strain CLIP80459) protein is Ribosomal RNA small subunit methyltransferase G.